A 225-amino-acid chain; its full sequence is Paired immunoglobulin-like type 2 receptor beta-2 (225 aa).

A signal peptide spans 1 to 31 (MALLISLPGETPAMAQILLLLSSACLHAGNS). Residues 32–195 (ARSNGGNDFG…NPSLMNLGAM (164 aa)) are Extracellular-facing. N-linked (GlcNAc...) asparagine glycosylation is found at Asn90, Asn107, and Asn160. A helical membrane pass occupies residues 196–216 (VTMLLAKVVVIILVYGWMIFL). Over 217 to 225 (RWKQRPDPA) the chain is Cytoplasmic.

The protein resides in the membrane. In terms of biological role, paired receptors consist of highly related activating and inhibitory receptors and are widely involved in the regulation of the immune system. PILRB2 is probably a cellular signaling activating receptor that associates with ITAM-bearing adapter molecules on the cell surface. The protein is Paired immunoglobulin-like type 2 receptor beta-2 (Pilrb2) of Mus musculus (Mouse).